The chain runs to 360 residues: Histidinol-phosphate aminotransferase 2 (360 aa).

At Lys218 the chain carries N6-(pyridoxal phosphate)lysine.

The protein belongs to the class-II pyridoxal-phosphate-dependent aminotransferase family. Histidinol-phosphate aminotransferase subfamily. In terms of assembly, homodimer. It depends on pyridoxal 5'-phosphate as a cofactor.

It catalyses the reaction L-histidinol phosphate + 2-oxoglutarate = 3-(imidazol-4-yl)-2-oxopropyl phosphate + L-glutamate. It participates in amino-acid biosynthesis; L-histidine biosynthesis; L-histidine from 5-phospho-alpha-D-ribose 1-diphosphate: step 7/9. The polypeptide is Histidinol-phosphate aminotransferase 2 (Nitrosococcus oceani (strain ATCC 19707 / BCRC 17464 / JCM 30415 / NCIMB 11848 / C-107)).